A 196-amino-acid polypeptide reads, in one-letter code: DnaA initiator-associating protein DiaA (196 aa).

An SIS domain is found at 34-196; that stretch reads LVHSLLNGNK…DNTLFLHQDD (163 aa).

Belongs to the SIS family. DiaA subfamily. As to quaternary structure, homotetramer; dimer of dimers.

Required for the timely initiation of chromosomal replication via direct interactions with the DnaA initiator protein. The protein is DnaA initiator-associating protein DiaA of Salmonella paratyphi A (strain ATCC 9150 / SARB42).